The following is a 245-amino-acid chain: Geranylgeranylglyceryl phosphate synthase (245 aa).

Positions 22 and 51 each coordinate Mg(2+). Sn-glycerol 1-phosphate-binding positions include Tyr169 to Gly175, Gly200 to Gly201, and Gly222 to Thr223.

It belongs to the GGGP/HepGP synthase family. Group II subfamily. In terms of assembly, homopentamer. Requires Mg(2+) as cofactor.

The protein resides in the cytoplasm. The enzyme catalyses sn-glycerol 1-phosphate + (2E,6E,10E)-geranylgeranyl diphosphate = sn-3-O-(geranylgeranyl)glycerol 1-phosphate + diphosphate. It functions in the pathway membrane lipid metabolism; glycerophospholipid metabolism. Its activity is regulated as follows. Inhibited by EDTA in vitro. In terms of biological role, prenyltransferase that catalyzes the transfer of the geranylgeranyl moiety of geranylgeranyl diphosphate (GGPP) to the C3 hydroxyl of sn-glycerol-1-phosphate (G1P). This reaction is the first ether-bond-formation step in the biosynthesis of archaeal membrane lipids. Cannot use sn-glycerol-3-phosphate (G3P) or dihydroxyacetonephosphate (DHAP) as substrate. This is Geranylgeranylglyceryl phosphate synthase from Methanothermobacter marburgensis (strain ATCC BAA-927 / DSM 2133 / JCM 14651 / NBRC 100331 / OCM 82 / Marburg) (Methanobacterium thermoautotrophicum).